A 398-amino-acid polypeptide reads, in one-letter code: Small ribosomal subunit protein mS29 (398 aa).

The transit peptide at 1-21 (MMLKGITRLISRIHKLDPGRF) directs the protein to the mitochondrion. Residues 39–67 (QVPVESPRAISRTNENDPAKHGDQHEGQH) are disordered. Positions 52 to 66 (NENDPAKHGDQHEGQ) are enriched in basic and acidic residues. GTP is bound by residues M100 and 128–135 (GEKGTGKT). N6-acetyllysine occurs at positions 175 and 207.

The protein belongs to the mitochondrion-specific ribosomal protein mS29 family. As to quaternary structure, component of the mitochondrial small ribosomal subunit (mt-SSU). Mature mammalian 55S mitochondrial ribosomes consist of a small (28S) and a large (39S) subunit. The 28S small subunit contains a 12S ribosomal RNA (12S mt-rRNA) and 30 different proteins. The 39S large subunit contains a 16S rRNA (16S mt-rRNA), a copy of mitochondrial valine transfer RNA (mt-tRNA(Val)), which plays an integral structural role, and 52 different proteins. Interacts with DELE1. Interacts with NOA1. As to expression, ubiquitous.

The protein localises to the mitochondrion. The catalysed reaction is GTP + H2O = GDP + phosphate + H(+). As a component of the mitochondrial small ribosomal subunit, it plays a role in the translation of mitochondrial mRNAs. Involved in mediating interferon-gamma-induced cell death. Displays GTPase activity in vitro. The protein is Small ribosomal subunit protein mS29 of Homo sapiens (Human).